A 45-amino-acid chain; its full sequence is uncharacterized protein (45 aa).

A C2H2-type zinc finger spans residues 2 to 25 (YQCLRCGGIFNKRREVVEHLLVGH).

This is an uncharacterized protein from Sulfolobus spindle-shape virus 1 (SSV1).